The following is a 181-amino-acid chain: Ribosome-recycling factor (181 aa).

It belongs to the RRF family.

It localises to the cytoplasm. Responsible for the release of ribosomes from messenger RNA at the termination of protein biosynthesis. May increase the efficiency of translation by recycling ribosomes from one round of translation to another. The polypeptide is Ribosome-recycling factor (Tropheryma whipplei (strain TW08/27) (Whipple's bacillus)).